We begin with the raw amino-acid sequence, 420 residues long: Glutamyl-tRNA reductase (420 aa).

Residues 49-52, Ser-107, 112-114, and Gln-118 each bind substrate; these read TCNR and EPQ. Cys-50 acts as the Nucleophile in catalysis. 187-192 is an NADP(+) binding site; sequence GAGETI.

It belongs to the glutamyl-tRNA reductase family. As to quaternary structure, homodimer.

The enzyme catalyses (S)-4-amino-5-oxopentanoate + tRNA(Glu) + NADP(+) = L-glutamyl-tRNA(Glu) + NADPH + H(+). It participates in porphyrin-containing compound metabolism; protoporphyrin-IX biosynthesis; 5-aminolevulinate from L-glutamyl-tRNA(Glu): step 1/2. Functionally, catalyzes the NADPH-dependent reduction of glutamyl-tRNA(Glu) to glutamate 1-semialdehyde (GSA). This is Glutamyl-tRNA reductase from Methylococcus capsulatus (strain ATCC 33009 / NCIMB 11132 / Bath).